A 405-amino-acid chain; its full sequence is Argininosuccinate synthase (405 aa).

ATP is bound at residue alanine 11–serine 19. Residue tyrosine 90 coordinates L-citrulline. Position 119 (glycine 119) interacts with ATP. L-aspartate contacts are provided by threonine 121, asparagine 125, and aspartate 126. Asparagine 125 lines the L-citrulline pocket. Residues arginine 129, serine 178, serine 187, glutamate 263, and tyrosine 275 each contribute to the L-citrulline site.

It belongs to the argininosuccinate synthase family. Type 1 subfamily. In terms of assembly, homotetramer.

The protein resides in the cytoplasm. It catalyses the reaction L-citrulline + L-aspartate + ATP = 2-(N(omega)-L-arginino)succinate + AMP + diphosphate + H(+). The protein operates within amino-acid biosynthesis; L-arginine biosynthesis; L-arginine from L-ornithine and carbamoyl phosphate: step 2/3. The protein is Argininosuccinate synthase of Legionella pneumophila (strain Paris).